We begin with the raw amino-acid sequence, 165 residues long: NADH-quinone oxidoreductase subunit I (165 aa).

4Fe-4S ferredoxin-type domains lie at 57-86 (RRYD…IESE) and 96-125 (SRYD…ETHI). The [4Fe-4S] cluster site is built by cysteine 66, cysteine 69, cysteine 72, cysteine 76, cysteine 105, cysteine 108, cysteine 111, and cysteine 115.

The protein belongs to the complex I 23 kDa subunit family. NDH-1 is composed of 14 different subunits. Subunits NuoA, H, J, K, L, M, N constitute the membrane sector of the complex. [4Fe-4S] cluster is required as a cofactor.

The protein localises to the cell inner membrane. It carries out the reaction a quinone + NADH + 5 H(+)(in) = a quinol + NAD(+) + 4 H(+)(out). Its function is as follows. NDH-1 shuttles electrons from NADH, via FMN and iron-sulfur (Fe-S) centers, to quinones in the respiratory chain. The immediate electron acceptor for the enzyme in this species is believed to be ubiquinone. Couples the redox reaction to proton translocation (for every two electrons transferred, four hydrogen ions are translocated across the cytoplasmic membrane), and thus conserves the redox energy in a proton gradient. The sequence is that of NADH-quinone oxidoreductase subunit I from Polaromonas sp. (strain JS666 / ATCC BAA-500).